Reading from the N-terminus, the 84-residue chain is Small ribosomal subunit protein bS20 (84 aa).

Belongs to the bacterial ribosomal protein bS20 family.

Binds directly to 16S ribosomal RNA. This chain is Small ribosomal subunit protein bS20, found in Bacteroides thetaiotaomicron (strain ATCC 29148 / DSM 2079 / JCM 5827 / CCUG 10774 / NCTC 10582 / VPI-5482 / E50).